A 69-amino-acid chain; its full sequence is uncharacterized protein (69 aa).

This is an uncharacterized protein from Vaccinia virus (strain Copenhagen) (VACV).